Here is a 248-residue protein sequence, read N- to C-terminus: ATP synthase subunit a, chloroplastic (248 aa).

The next 5 helical transmembrane spans lie at 37–57, 96–116, 135–155, 200–220, and 221–241; these read AQVL…SIVA, VPFI…GALF, INTT…AGLH, LVVA…MMFL, and GLFT…AYIG.

Belongs to the ATPase A chain family. As to quaternary structure, F-type ATPases have 2 components, CF(1) - the catalytic core - and CF(0) - the membrane proton channel. CF(1) has five subunits: alpha(3), beta(3), gamma(1), delta(1), epsilon(1). CF(0) has four main subunits: a, b, b' and c.

It is found in the plastid. It localises to the chloroplast thylakoid membrane. In terms of biological role, key component of the proton channel; it plays a direct role in the translocation of protons across the membrane. The chain is ATP synthase subunit a, chloroplastic from Angiopteris evecta (Mule's foot fern).